Here is a 624-residue protein sequence, read N- to C-terminus: Histone-lysine N-methyltransferase, H3 lysine-9 specific SUVH4 (624 aa).

Disordered stretches follow at residues Met-1–Val-25 and Asp-54–Gln-86. A YDG domain is found at Gly-149–Arg-302. One can recognise a Pre-SET domain in the interval Thr-381–Arg-443. Residues Cys-383, Cys-385, Cys-389, Cys-395, Cys-397, Cys-425, Cys-429, Cys-431, and Cys-435 each coordinate Zn(2+). The SET domain maps to Phe-446–Gly-594. Residues Lys-456–Trp-458, Tyr-493, Arg-548, and Asn-551–His-552 contribute to the S-adenosyl-L-methionine site. Zn(2+)-binding residues include Cys-554, Cys-612, Cys-614, and Cys-619. The 17-residue stretch at Lys-608–Tyr-624 folds into the Post-SET domain.

Belongs to the class V-like SAM-binding methyltransferase superfamily. Histone-lysine methyltransferase family. Suvar3-9 subfamily. Interacts with H3 histone. Expressed in leaves stems and flowers.

Its subcellular location is the nucleus. The protein resides in the chromosome. It is found in the centromere. It carries out the reaction N(6)-methyl-L-lysyl(9)-[histone H3] + S-adenosyl-L-methionine = N(6),N(6)-dimethyl-L-lysyl(9)-[histone H3] + S-adenosyl-L-homocysteine + H(+). It catalyses the reaction L-lysyl(9)-[histone H3] + S-adenosyl-L-methionine = N(6)-methyl-L-lysyl(9)-[histone H3] + S-adenosyl-L-homocysteine + H(+). In terms of biological role, histone methyltransferase. Methylates 'Lys-9' of histone H3. H3 'Lys-9' methylation represents a specific tag for epigenetic transcriptional repression. The silencing mechanism via DNA CpNpG methylation requires the targeting of chromomethylase CMT3 to methylated histones, probably through an interaction with an HP1-like adapter. By its function, KYP is directly required for the maintenance of the DNA CpNpG and asymmetric methylation. Involved in the silencing of transposable elements. The polypeptide is Histone-lysine N-methyltransferase, H3 lysine-9 specific SUVH4 (SUVH4) (Arabidopsis thaliana (Mouse-ear cress)).